The chain runs to 238 residues: MTSPQNDLLSLATPYALHALSHAEAADIDRALNDAPPGVADAFLAEVRAVRETMAALASATAVEPPARMRDAVLRQIAEDPVRTLPVRSSSRRRAAAVLSAAAAVVIGLGTLAVGYALRPAPTPSTAEQVFAAPDVRTISGEIPGGGTATVVFSREQNSGVLVMNNVPPPQPGTVYQMWLVDADGSHSAGTMDAEAVAPSTTAVLPDLGSSRALAFTVEPPGGSTRPTTPVFAELPLT.

The Cytoplasmic portion of the chain corresponds to 1 to 97; sequence MTSPQNDLLS…RSSSRRRAAA (97 aa). Residues 98–118 traverse the membrane as a helical segment; the sequence is VLSAAAAVVIGLGTLAVGYAL. Over 119–238 the chain is Extracellular; sequence RPAPTPSTAE…TPVFAELPLT (120 aa).

This sequence belongs to the anti-sigma-K factor family.

Its subcellular location is the cell membrane. Functionally, an anti-sigma factor for extracytoplasmic function (ECF) sigma factor SigK. ECF sigma factors are held in an inactive form by an anti-sigma factor until released by regulated intramembrane proteolysis (RIP). RIP occurs when an extracytoplasmic signal triggers a concerted proteolytic cascade to transmit information and elicit cellular responses. The membrane-spanning regulatory substrate protein is first cut extracytoplasmically (site-1 protease, S1P), then within the membrane itself (site-2 protease, S2P, Rip1), while cytoplasmic proteases finish degrading the regulatory protein, liberating the sigma factor. In Mycolicibacterium vanbaalenii (strain DSM 7251 / JCM 13017 / BCRC 16820 / KCTC 9966 / NRRL B-24157 / PYR-1) (Mycobacterium vanbaalenii), this protein is Anti-sigma-K factor RskA (rskA).